Consider the following 216-residue polypeptide: Large ribosomal subunit protein uL4 (216 aa).

Residues T47–L77 are disordered.

The protein belongs to the universal ribosomal protein uL4 family. As to quaternary structure, part of the 50S ribosomal subunit.

In terms of biological role, one of the primary rRNA binding proteins, this protein initially binds near the 5'-end of the 23S rRNA. It is important during the early stages of 50S assembly. It makes multiple contacts with different domains of the 23S rRNA in the assembled 50S subunit and ribosome. Functionally, forms part of the polypeptide exit tunnel. The sequence is that of Large ribosomal subunit protein uL4 from Acidiphilium cryptum (strain JF-5).